The primary structure comprises 418 residues: Serine hydroxymethyltransferase (418 aa).

Residues Leu121 and 125–127 contribute to the (6S)-5,6,7,8-tetrahydrofolate site; that span reads GHL. Residue Lys230 is modified to N6-(pyridoxal phosphate)lysine. 356–358 lines the (6S)-5,6,7,8-tetrahydrofolate pocket; sequence SPF.

This sequence belongs to the SHMT family. In terms of assembly, homodimer. Pyridoxal 5'-phosphate serves as cofactor.

It localises to the cytoplasm. The enzyme catalyses (6R)-5,10-methylene-5,6,7,8-tetrahydrofolate + glycine + H2O = (6S)-5,6,7,8-tetrahydrofolate + L-serine. The protein operates within one-carbon metabolism; tetrahydrofolate interconversion. It participates in amino-acid biosynthesis; glycine biosynthesis; glycine from L-serine: step 1/1. Catalyzes the reversible interconversion of serine and glycine with tetrahydrofolate (THF) serving as the one-carbon carrier. This reaction serves as the major source of one-carbon groups required for the biosynthesis of purines, thymidylate, methionine, and other important biomolecules. Also exhibits THF-independent aldolase activity toward beta-hydroxyamino acids, producing glycine and aldehydes, via a retro-aldol mechanism. This Shewanella pealeana (strain ATCC 700345 / ANG-SQ1) protein is Serine hydroxymethyltransferase.